Here is a 262-residue protein sequence, read N- to C-terminus: Linker for activation of T-cells family member 1 (262 aa).

The Extracellular portion of the chain corresponds to 1 to 4 (MEEA). The chain crosses the membrane as a helical; Signal-anchor for type III membrane protein span at residues 5–27 (ILVPCVLGLLLLPILAMLMALCV). Residues Cys26 and Cys29 are each lipidated (S-palmitoyl cysteine). The Cytoplasmic portion of the chain corresponds to 28–262 (HCHRLPGSYD…PDYENLQELN (235 aa)). Position 39 is a phosphothreonine (Thr39). A phosphoserine mark is found at Ser40, Ser41, Ser43, Ser84, Ser101, Ser106, and Ser109. The interval 69 to 115 (SYPPLSQPDLLPIPRSPQPLGGSHRTPSSRRDSDGANSVASYENEGA) is disordered. A phosphotyrosine mark is found at Tyr110, Tyr156, Tyr161, Tyr200, and Tyr220. The interaction with PLCG1 stretch occupies residues 161–164 (YLVV). Interaction with GRB2, GRAP2 and PIK3R1 regions lie at residues 200–203 (YVNV) and 220–223 (YVNV). The tract at residues 206–262 (SGESAEASLDGSREYVNVSQELHPGAAKTEPAALSSQEAEEVEEEGAPDYENLQELN) is disordered. Phosphoserine occurs at positions 224, 240, and 241. Residues 243–253 (EAEEVEEEGAP) are compositionally biased toward acidic residues. A Phosphotyrosine modification is found at Tyr255.

As to quaternary structure, when phosphorylated, interacts directly with the PIK3R1 subunit of phosphoinositide 3-kinase and the SH2 domains of GRB2, GRAP, GRAP2, PLCG1 and PLCG2. Interacts indirectly with CBL, SOS, VAV, and LCP2. Interacts with SHB, SKAP2 and CLNK. Interacts with FCGR1A. Interacts with GRB2, PLCG1 and THEMIS upon TCR activation in thymocytes. Interacts with THEMIS2. In terms of assembly, (Microbial infection) Interacts with herpes virus 1/HHV-1 protein US3; this interaction prevents the interaction between LAT and TRAF6. Post-translationally, phosphorylated on tyrosines by ZAP70 upon TCR activation, or by SYK upon other immunoreceptor activation; which leads to the recruitment of multiple signaling molecules. Is one of the most prominently tyrosine-phosphorylated proteins detected following TCR engagement. May be dephosphorylated by PTPRJ. Phosphorylated by ITK leading to the recruitment of VAV1 to LAT-containing complexes. In terms of processing, palmitoylation of Cys-26 and Cys-29 is required for raft targeting and efficient phosphorylation. 'Lys-63'-linked ubiquitinated by TRAF6. Expressed in thymus, T-cells, NK cells, mast cells and, at lower levels, in spleen. Present in T-cells but not B-cells (at protein level).

The protein localises to the cell membrane. Its function is as follows. Required for TCR (T-cell antigen receptor)- and pre-TCR-mediated signaling, both in mature T-cells and during their development. Involved in FCGR3 (low affinity immunoglobulin gamma Fc region receptor III)-mediated signaling in natural killer cells and FCER1 (high affinity immunoglobulin epsilon receptor)-mediated signaling in mast cells. Couples activation of these receptors and their associated kinases with distal intracellular events such as mobilization of intracellular calcium stores, PKC activation, MAPK activation or cytoskeletal reorganization through the recruitment of PLCG1, GRB2, GRAP2, and other signaling molecules. In Homo sapiens (Human), this protein is Linker for activation of T-cells family member 1 (LAT).